We begin with the raw amino-acid sequence, 317 residues long: Lipoyl synthase (317 aa).

The [4Fe-4S] cluster site is built by Cys-59, Cys-64, Cys-70, Cys-85, Cys-89, Cys-92, and Ser-298. One can recognise a Radical SAM core domain in the interval 71-287 (WSQRHASFMI…AKIGKAKGFL (217 aa)).

It belongs to the radical SAM superfamily. Lipoyl synthase family. The cofactor is [4Fe-4S] cluster.

It localises to the cytoplasm. The enzyme catalyses [[Fe-S] cluster scaffold protein carrying a second [4Fe-4S](2+) cluster] + N(6)-octanoyl-L-lysyl-[protein] + 2 oxidized [2Fe-2S]-[ferredoxin] + 2 S-adenosyl-L-methionine + 4 H(+) = [[Fe-S] cluster scaffold protein] + N(6)-[(R)-dihydrolipoyl]-L-lysyl-[protein] + 4 Fe(3+) + 2 hydrogen sulfide + 2 5'-deoxyadenosine + 2 L-methionine + 2 reduced [2Fe-2S]-[ferredoxin]. It participates in protein modification; protein lipoylation via endogenous pathway; protein N(6)-(lipoyl)lysine from octanoyl-[acyl-carrier-protein]: step 2/2. Its function is as follows. Catalyzes the radical-mediated insertion of two sulfur atoms into the C-6 and C-8 positions of the octanoyl moiety bound to the lipoyl domains of lipoate-dependent enzymes, thereby converting the octanoylated domains into lipoylated derivatives. The sequence is that of Lipoyl synthase from Bartonella bacilliformis (strain ATCC 35685 / KC583 / Herrer 020/F12,63).